The chain runs to 40 residues: Photosystem II reaction center protein J (40 aa).

The helical transmembrane segment at 8–28 (IPLWIIGTVTGIIVIGLIGIF) threads the bilayer.

Belongs to the PsbJ family. PSII is composed of 1 copy each of membrane proteins PsbA, PsbB, PsbC, PsbD, PsbE, PsbF, PsbH, PsbI, PsbJ, PsbK, PsbL, PsbM, PsbT, PsbX, PsbY, PsbZ, Psb30/Ycf12, at least 3 peripheral proteins of the oxygen-evolving complex and a large number of cofactors. It forms dimeric complexes.

It localises to the plastid. The protein resides in the chloroplast thylakoid membrane. One of the components of the core complex of photosystem II (PSII). PSII is a light-driven water:plastoquinone oxidoreductase that uses light energy to abstract electrons from H(2)O, generating O(2) and a proton gradient subsequently used for ATP formation. It consists of a core antenna complex that captures photons, and an electron transfer chain that converts photonic excitation into a charge separation. This is Photosystem II reaction center protein J from Morus indica (Mulberry).